Here is a 197-residue protein sequence, read N- to C-terminus: Holliday junction branch migration complex subunit RuvA (197 aa).

The interval 1 to 63 (MFDYIKGQLT…EDAHLLFGFH (63 aa)) is domain I. The domain II stretch occupies residues 64–142 (TENEKDVFLK…TIPEGGQAQQ (79 aa)). The segment at 142–146 (QMPKA) is flexible linker. The segment at 147 to 197 (KGNQQLDEAIEALLALGYKATELKKIRAFFEGTDDTAEQYIKSALKMLMKG) is domain III.

This sequence belongs to the RuvA family. As to quaternary structure, homotetramer. Forms an RuvA(8)-RuvB(12)-Holliday junction (HJ) complex. HJ DNA is sandwiched between 2 RuvA tetramers; dsDNA enters through RuvA and exits via RuvB. An RuvB hexamer assembles on each DNA strand where it exits the tetramer. Each RuvB hexamer is contacted by two RuvA subunits (via domain III) on 2 adjacent RuvB subunits; this complex drives branch migration. In the full resolvosome a probable DNA-RuvA(4)-RuvB(12)-RuvC(2) complex forms which resolves the HJ.

The protein localises to the cytoplasm. The RuvA-RuvB-RuvC complex processes Holliday junction (HJ) DNA during genetic recombination and DNA repair, while the RuvA-RuvB complex plays an important role in the rescue of blocked DNA replication forks via replication fork reversal (RFR). RuvA specifically binds to HJ cruciform DNA, conferring on it an open structure. The RuvB hexamer acts as an ATP-dependent pump, pulling dsDNA into and through the RuvAB complex. HJ branch migration allows RuvC to scan DNA until it finds its consensus sequence, where it cleaves and resolves the cruciform DNA. This is Holliday junction branch migration complex subunit RuvA from Streptococcus uberis (strain ATCC BAA-854 / 0140J).